Reading from the N-terminus, the 308-residue chain is uncharacterized protein (308 aa).

Residues leucine 50, aspartate 90, asparagine 117, tyrosine 182, lysine 186, isoleucine 222, and threonine 224 each contribute to the NADP(+) site. Tyrosine 182 acts as the Proton acceptor in catalysis. Lysine 186 acts as the Lowers pKa of active site Tyr in catalysis.

The protein belongs to the short-chain dehydrogenases/reductases (SDR) family.

This is an uncharacterized protein from Saccharomyces cerevisiae (strain ATCC 204508 / S288c) (Baker's yeast).